Consider the following 71-residue polypeptide: Small ribosomal subunit protein bS21 (71 aa).

Belongs to the bacterial ribosomal protein bS21 family.

In Dichelobacter nodosus (strain VCS1703A), this protein is Small ribosomal subunit protein bS21.